Reading from the N-terminus, the 304-residue chain is MDFNNYIGLESDDRLNAFMATLSVTNRTPEYYVNWEKVERETRKFELELNTLNYLIGKEDIYSEALELFTNQPELLKAIPSLIASRDTSLDILNIDENDDMSFEQLNFLVIDENCIADYVDFINQAGLLDFLQNKAKRSLVDYVYGVEAGLDSNARKTRSGTTMEGILERTVSKIAQGKGLDWKPQATASFIKSQWDIEVPVDKSKRRFDAAVYSRALNKVWLIETNYYGGGGSKLKAVAGEFTELSQFVKTSKDNVEFVWVTDGQGWKFSRLPLAEAFGHIDNVFNLTMLKEGFLSDLFEKEI.

This sequence belongs to the DpnII type II restriction endonuclease family.

The catalysed reaction is Endonucleolytic cleavage of DNA to give specific double-stranded fragments with terminal 5'-phosphates.. In terms of biological role, a P subtype restriction enzyme that recognizes the double-stranded unmethylated sequence 5'-GATC-3' and cleaves before G-1. This Lactococcus lactis subsp. cremoris (Streptococcus cremoris) protein is Type II restriction enzyme LlaDCHI (llaDCHIR).